Here is a 395-residue protein sequence, read N- to C-terminus: Tryptophan--tRNA ligase, cytoplasmic (395 aa).

The 'HIGH' region motif lies at 91-100 (PSSDSMHLGH). A 'KMSKS' region motif is present at residues 275-279 (KMSAS). Residues Thr288 and Thr290 each carry the phosphothreonine modification.

The protein belongs to the class-I aminoacyl-tRNA synthetase family.

It localises to the cytoplasm. The enzyme catalyses tRNA(Trp) + L-tryptophan + ATP = L-tryptophyl-tRNA(Trp) + AMP + diphosphate + H(+). The protein is Tryptophan--tRNA ligase, cytoplasmic (wrs1) of Schizosaccharomyces pombe (strain 972 / ATCC 24843) (Fission yeast).